The primary structure comprises 333 residues: tRNA N6-adenosine threonylcarbamoyltransferase (333 aa).

Fe cation is bound by residues His-111 and His-115. Residues 134-138 (LVSGG), Asp-167, Gly-180, and Asn-272 each bind substrate. Asp-300 lines the Fe cation pocket.

It belongs to the KAE1 / TsaD family. Requires Fe(2+) as cofactor.

It localises to the cytoplasm. It carries out the reaction L-threonylcarbamoyladenylate + adenosine(37) in tRNA = N(6)-L-threonylcarbamoyladenosine(37) in tRNA + AMP + H(+). Its function is as follows. Required for the formation of a threonylcarbamoyl group on adenosine at position 37 (t(6)A37) in tRNAs that read codons beginning with adenine. Is involved in the transfer of the threonylcarbamoyl moiety of threonylcarbamoyl-AMP (TC-AMP) to the N6 group of A37, together with TsaE and TsaB. TsaD likely plays a direct catalytic role in this reaction. This Legionella pneumophila subsp. pneumophila (strain Philadelphia 1 / ATCC 33152 / DSM 7513) protein is tRNA N6-adenosine threonylcarbamoyltransferase.